The sequence spans 228 residues: DNA mismatch repair protein MutH (228 aa).

This sequence belongs to the MutH family.

The protein resides in the cytoplasm. In terms of biological role, sequence-specific endonuclease that cleaves unmethylated GATC sequences. It is involved in DNA mismatch repair. In Photorhabdus laumondii subsp. laumondii (strain DSM 15139 / CIP 105565 / TT01) (Photorhabdus luminescens subsp. laumondii), this protein is DNA mismatch repair protein MutH.